The following is a 389-amino-acid chain: Phospho-N-acetylmuramoyl-pentapeptide-transferase (389 aa).

10 helical membrane passes run 25–45 (RAVMATITALLIGLVCGPAVI), 73–93 (TMGGVLILLGIAVATLLWADL), 97–117 (FIWIVMLVTFGFGVIGWVDDY), 135–155 (FWQSVIGLFAAVYLAFSVSEA), 190–210 (ISYPLGVWGFIVLTYLVIVGA), 222–242 (GLVIMPVVLVGASLGVFAYVM), 259–279 (AGELLIFCSAMGGAGLAFLWF), 287–307 (FMGDVGALALGGALGTVAVIV), 311–331 (IVLFIMGGIFVAETLSVMLQV), and 366–386 (QVVVRFWIITLMLCLFGLSTL).

It belongs to the glycosyltransferase 4 family. MraY subfamily. Mg(2+) is required as a cofactor.

Its subcellular location is the cell inner membrane. It catalyses the reaction UDP-N-acetyl-alpha-D-muramoyl-L-alanyl-gamma-D-glutamyl-meso-2,6-diaminopimeloyl-D-alanyl-D-alanine + di-trans,octa-cis-undecaprenyl phosphate = di-trans,octa-cis-undecaprenyl diphospho-N-acetyl-alpha-D-muramoyl-L-alanyl-D-glutamyl-meso-2,6-diaminopimeloyl-D-alanyl-D-alanine + UMP. It participates in cell wall biogenesis; peptidoglycan biosynthesis. In terms of biological role, catalyzes the initial step of the lipid cycle reactions in the biosynthesis of the cell wall peptidoglycan: transfers peptidoglycan precursor phospho-MurNAc-pentapeptide from UDP-MurNAc-pentapeptide onto the lipid carrier undecaprenyl phosphate, yielding undecaprenyl-pyrophosphoryl-MurNAc-pentapeptide, known as lipid I. This chain is Phospho-N-acetylmuramoyl-pentapeptide-transferase, found in Paraburkholderia phytofirmans (strain DSM 17436 / LMG 22146 / PsJN) (Burkholderia phytofirmans).